The following is a 279-amino-acid chain: Putative hydroxypyruvate isomerase (279 aa).

Residues Glu155 and Glu256 each act as proton donor/acceptor in the active site. A disordered region spans residues 260–279 (GDDPSAQSFSWLPAGARAAR).

Belongs to the hyi family.

The catalysed reaction is 3-hydroxypyruvate = 2-hydroxy-3-oxopropanoate. Functionally, catalyzes the reversible isomerization between hydroxypyruvate and 2-hydroxy-3-oxopropanoate (also termed tartronate semialdehyde). In Streptomyces coelicolor (strain ATCC BAA-471 / A3(2) / M145), this protein is Putative hydroxypyruvate isomerase.